The chain runs to 356 residues: S-adenosylmethionine:tRNA ribosyltransferase-isomerase (356 aa).

This sequence belongs to the QueA family. As to quaternary structure, monomer.

It localises to the cytoplasm. The catalysed reaction is 7-aminomethyl-7-carbaguanosine(34) in tRNA + S-adenosyl-L-methionine = epoxyqueuosine(34) in tRNA + adenine + L-methionine + 2 H(+). It participates in tRNA modification; tRNA-queuosine biosynthesis. Transfers and isomerizes the ribose moiety from AdoMet to the 7-aminomethyl group of 7-deazaguanine (preQ1-tRNA) to give epoxyqueuosine (oQ-tRNA). This chain is S-adenosylmethionine:tRNA ribosyltransferase-isomerase, found in Chromohalobacter salexigens (strain ATCC BAA-138 / DSM 3043 / CIP 106854 / NCIMB 13768 / 1H11).